The chain runs to 471 residues: FAD-dependent monooxygenase andE (471 aa).

3 residues coordinate FAD: Glu-35, Gly-49, and Arg-108. The active site involves Tyr-216. FAD-binding residues include Asp-308 and Ala-321. 2 helical membrane-spanning segments follow: residues 403-423 (LANI…LPFP) and 443-463 (TPFA…LLGL).

This sequence belongs to the paxM FAD-dependent monooxygenase family. FAD is required as a cofactor.

The protein resides in the membrane. It participates in secondary metabolite biosynthesis; terpenoid biosynthesis. Functionally, FAD-dependent monooxygenase; part of the gene cluster that mediates the biosynthesis of anditomin, a fungal meroterpenoid. The first step of the pathway is the synthesis of 3,5-dimethylorsellinic acid (DMOA) by the polyketide synthase andM. DMOA is then converted to the phthalide compound 5,7-dihydroxy-4,6-dimethylphthalide (DHDMP) by the cytochrome P450 monooxygenase andK, which is further prenylated by the prenyltransferase andD to yield farnesyl-DHDMP. Further epoxidation by the FAD-dependent monooxygenase andE leads to epoxyfarnesyl-DHDMP. The next step involves the terpene cyclase andB that converts epoxyfarnesyl-DHDMP into preandiloid A through opening of the epoxide ring followed by the cyclization of the farnesyl moiety. Preandiloid A is in turn oxidized at the C-3 hydroxyl group to yield preandiloid B by the dehydrogenase andC. The dioxygenase andA is solely responsible for the dehydrogenation of preandiloid B leading to the enone preandiloid C, as well as for the intriguing structural rearrangement to generate the bicyclo[2.2.2]octane core, transforming preandiloid C into andiconin. FAD-binding monooxygenase andJ then produces andilesin D which is reduced by dehydrogenase andI to yield andilesin A. Action of acetyltransferase andG followed by a spontaneous acetate elimination leads then to andilesin B, which is in turn substrate of the short chain dehydrogenase andH to yield andilesin C. Finally, the dioxygenase andF catalyzes the transformation of andilesin C to anditomin. In Emericella variicolor (Aspergillus stellatus), this protein is FAD-dependent monooxygenase andE.